Consider the following 266-residue polypeptide: MALPTFTMRQLVEAGVHFGHNTRRWNPKMASYLFGIRNGIHIIDLQQSVPMLHRAMQAVRDVTAGGGRVLFVGTKHQASDVVAESAKRCGQYFVNHRWLGGMLTNWKTISNSIRRLRELDEQLASGALAGLTKKEQLVLSREKEKLDRALGGIKDMGGLPDILFIIDTNKEALAVQEANKLGIPVVAIIDSNCDPAGITYPIPGNDDAIRAIQTYCDLMSGAVLDGIQAEITRGGGDVGAAAEAPVEQIPEVVAEAAAEEAAAPQA.

Belongs to the universal ribosomal protein uS2 family.

This chain is Small ribosomal subunit protein uS2, found in Paramagnetospirillum magneticum (strain ATCC 700264 / AMB-1) (Magnetospirillum magneticum).